We begin with the raw amino-acid sequence, 230 residues long: 2-phytyl-1,4-naphtoquinone methyltransferase (230 aa).

The protein belongs to the class I-like SAM-binding methyltransferase superfamily. MenG/UbiE family.

The catalysed reaction is demethylphylloquinol + S-adenosyl-L-methionine = phylloquinol + S-adenosyl-L-homocysteine + H(+). It participates in cofactor biosynthesis; phylloquinone biosynthesis. Its function is as follows. Methyltransferase required for the conversion of 2-phytyl-1,4-beta-naphthoquinol to phylloquinol. This Nostoc punctiforme (strain ATCC 29133 / PCC 73102) protein is 2-phytyl-1,4-naphtoquinone methyltransferase.